Consider the following 513-residue polypeptide: MQPDPNPAAAPAALIELTGVSKRFPGVQALDDCRFDLRAGEVHALMGENGAGKSTLMKILAGVYQKDGGEIRMDGRAVEIDDPRAAQALGIGIIHQELNLMNHLSVAQNIFIGREPRGRFGVFVDEDKLNRDAAAIFARMRLDLDPRTLVGRLTVAKQQMVEIAKALSFDSRVLIMDEPTAALNNAEIAELFRIIGELRAHGVGIVYISHKMDELRQIADRVTVMRDGKYVATVPMAGTSMDAIIAMMVGRQLDTEFRTPPDTSANDVALEVRGLSRGRAIRDVGFTLRRGEILGFAGLMGAGRTEVARAVFGADPVDAGEIRVHGKTVTIRTPADAVAHGIGYLSEDRKHFGLAVGMDVQNNIALSSMRRFVRRGLFLDARQMRDTAQSYVRQLAIRTPSVAQPARLLSGGNQQKIVIAKWLLRDCDILFFDEPTRGIDVGAKSEIYKLLDALAAEGKAIVMISSELPEVLRMSHRILVMCEGRVTGELRAADATQEKIMQLATQRESTVLS.

2 consecutive ABC transporter domains span residues 15-252 (IELT…VGRQ) and 263-508 (TSAN…TQRE). An ATP-binding site is contributed by 47-54 (GENGAGKS).

It belongs to the ABC transporter superfamily. Carbohydrate importer 2 (CUT2) (TC 3.A.1.2) family.

Its subcellular location is the cell inner membrane. The catalysed reaction is D-ribose(out) + ATP + H2O = D-ribose(in) + ADP + phosphate + H(+). It catalyses the reaction D-galactose(out) + ATP + H2O = D-galactose(in) + ADP + phosphate + H(+). In terms of biological role, part of an ABC transporter complex involved in carbohydrate import. Could be involved in ribose, galactose and/or methyl galactoside import. Responsible for energy coupling to the transport system. The chain is Putative ribose/galactose/methyl galactoside import ATP-binding protein 3 from Burkholderia ambifaria (strain ATCC BAA-244 / DSM 16087 / CCUG 44356 / LMG 19182 / AMMD) (Burkholderia cepacia (strain AMMD)).